Consider the following 495-residue polypeptide: OTU domain-containing protein CG3251 (495 aa).

The OTU domain occupies 29 to 150 (LFRKHMLGDA…MGHFETVLTM (122 aa)). The Tudor domain maps to 302-364 (NFKVGAKCQV…HPLPPDEFKA (63 aa)). The segment covering 375-389 (LHNSQMGRQSVQGDQ) has biased composition (polar residues). The disordered stretch occupies residues 375-404 (LHNSQMGRQSVQGDQQGFVPDPMPGTAPSM). Positions 395–404 (DPMPGTAPSM) are enriched in pro residues.

Putative OTU-type deubiquitinase. Catalytically inactive towards all diubiquitin molecules and long K48- and K63- linked ubiquitin chains in vitro. Potential modulator of apoptosis. In Drosophila melanogaster (Fruit fly), this protein is OTU domain-containing protein CG3251.